A 498-amino-acid polypeptide reads, in one-letter code: Putative antiporter subunit mnhD2 (498 aa).

A run of 14 helical transmembrane segments spans residues 2-22 (LSNLLILPMLLPFLCALILVF), 32-52 (YLYLGTMTITTIISLMLLIYV), 78-98 (LSLIMVTTASFVITLIMAYGF), 108-128 (YHLPSFILFLSVGVIGSFLTS), 130-150 (LFNLYVMFEIMLLASFVLITL), 161-181 (IIYVVLNIIGSWLFLLGIGLL), 209-229 (ISLIFLVAFSAKAALVLFMWL), 240-260 (LAALFAALMTKVGAYALIRFF), 271-291 (IHPLLVTMAAITMVIGAIGVI), 308-328 (IGFIILGLGTNTFAGINGAIF), 330-350 (LVNDIVVKTLLFFIIGSLVYI), 368-388 (FFGVAFIIMIFAIGGVPPFSG), 403-423 (GNYIGLALMIITSLIAMYSLF), and 450-470 (GILSILVVVVIAIGIAAPVLL).

The protein belongs to the CPA3 antiporters (TC 2.A.63) subunit D family. As to quaternary structure, may form a heterooligomeric complex that consists of seven subunits: mnhA2, mnhB2, mnhC2, mnhD2, mnhE2, mnhF2 and mnhG2.

The protein localises to the cell membrane. This is Putative antiporter subunit mnhD2 (mnhD2) from Staphylococcus aureus (strain MRSA252).